A 329-amino-acid polypeptide reads, in one-letter code: MEGLRRLLGLLLVLYRLCSALGKNLEPVTWNSQNPRFISGKGLVLYPEIGDRLDIICPKGDSSQPYEYYKLYMVRRDQLEACSTVIDPNVLVTCNQPGKEYRFTIKFQEFSPNYMGLEFRRNQDYYITSTSNSTLQGLENREGGVCQTRSMKIIMKVGQDPNAVPPEQLTTTRPSKEADNTGKIATFGPWNGPVENPGKSDTNLSDKPTAGGGVDGFFNSKIAVFAAIGAGCVIFILIIIFLVVLLIKIRKRHRKHTQQRAAALSLSTLASPKCSGNAGSEPSDIIIPLRTTENNYCPHYEKVSGDYGHPVYIVQEMPPQSPANIYYKV.

The signal sequence occupies residues 1-20; sequence MEGLRRLLGLLLVLYRLCSA. At 21–226 the chain is on the extracellular side; sequence LGKNLEPVTW…FFNSKIAVFA (206 aa). Residues 23–157 form the Ephrin RBD domain; it reads KNLEPVTWNS…TRSMKIIMKV (135 aa). 2 disulfide bridges follow: C57-C94 and C82-C146. An N-linked (GlcNAc...) asparagine glycan is attached at N132. A disordered region spans residues 163 to 192; it reads AVPPEQLTTTRPSKEADNTGKIATFGPWNG. N-linked (GlcNAc...) asparagine glycosylation occurs at N203. The chain crosses the membrane as a helical span at residues 227–247; sequence AIGAGCVIFILIIIFLVVLLI. The Cytoplasmic segment spans residues 248 to 329; it reads KIRKRHRKHT…QSPANIYYKV (82 aa). Positions 327 to 329 match the PDZ-binding motif; the sequence is YKV.

Belongs to the ephrin family. In terms of assembly, interacts with TLE4 through the PDZ-binding motif. Post-translationally, inducible phosphorylation of tyrosine residues in the cytoplasmic domain. Tyrosine phosphorylation inhibits TLE4-binding. As to expression, expressed at low levels in most tissues with highest levels in the kidney, oocytes, ovary and testis.

It is found in the membrane. In terms of biological role, cell surface transmembrane ligand for Eph receptors, a family of receptor tyrosine kinases which are crucial for migration, repulsion and adhesion during neuronal, vascular and epithelial development. Binds promiscuously Eph receptors residing on adjacent cells, leading to contact-dependent bidirectional signaling into neighboring cells. The signaling pathway downstream of the receptor is referred to as forward signaling while the signaling pathway downstream of the ephrin ligand is referred to as reverse signaling. May have a role in the developing mesenchymal and nervous tissue. The protein is Ephrin-B1 (efnb1) of Xenopus laevis (African clawed frog).